The sequence spans 68 residues: Protein SlyX homolog (68 aa).

This sequence belongs to the SlyX family.

The protein is Protein SlyX homolog of Brucella anthropi (strain ATCC 49188 / DSM 6882 / CCUG 24695 / JCM 21032 / LMG 3331 / NBRC 15819 / NCTC 12168 / Alc 37) (Ochrobactrum anthropi).